The chain runs to 1036 residues: MFAQLDTKTVYSFMDSLIDLNHYFERAKQFGYHTIGIMDKDNLYGAYHFIKGCQKNGLQPVLGLEVEILYQERQVLLNLIAQNTQGYHQLLKISTAKMSGKLHMDYLCQHLEGIAVIIPSKGWSDTLVVPFDYYIGVDQYTDLSHMDSKRQLIPLRTVRYFAQDDMETLHMLHAIRDNLSLAETPVVESDQELADCQQLTTFYQTHCPQALQNLEDLVSGIYYDFDTNLKLPHFNRDKSAKQELQDLTEAGLKEKGLWKEPYQSRLLHELVIISDMGFDDYFLIVWDLLRFGRSKGYYMGMGRGSAAGSLVAYALDITGIDPVQHDLLFERFLNKERYSMPDIDIDLPDIYRSEFLRYVRNRYGSDHSAQIVTFSTFGPKQAIRDVFKRFGVPEYELTNLTKKIGFKDSLATVYEKSISFRQVINSRTEFQKAFAIAKRIEGNPRQTSIHAAGIVMSDDTLTNHIPLKSGDDMMITQYDAHAVEANGLLKMDFLGLRNLTFVQKMQEKVAKDYGCQIDIAAIDLEDPQTLALFAKGDTKGIFQFEQNGAINLLKRIKPQRFEEIVATTSLNRPGASDYTTNFIKRREGQEKIDLIDPVIAPILEPTYGIMLYQEQVMQIAQVYAGFTLGKADLLRRAMSKKNLQEMQKMEEDFIASAKHLGRAEETARGLFKRMEKFAGYGFNRSHAFAYSALAFQLAYFKAHYPAVFYDIMMNYSSSDYITDALESDFQVAQVTINSIPYTDKIEASKIYMGLKNIKGLPRDFAYWIIEQRPFNSVEDFLTRTPEKYQKKVFLEPLIKIGLFDYFEPNRKKILDNLDGLLVFVNELGSLFSDSSFSWVDTKDYSATEKYSLEQEIVGVGMSKHPLIDIAEKSTQTFTPISQLVKESEAVVLIQIDSIRIIRTKTSGQQMAFLSVNDTKKKLDVTLFPQEYAIYKDQLKEGEFYYLKGRIKERDHRLQMVCQQVQMAISQKYWLLVENHQFDSQISEILGAFPGTTPVVIHYQKNKETIALTKIQVHVTENLKEKLRPFVLKTVFR.

It belongs to the DNA polymerase type-C family. DnaE subfamily. In terms of assembly, DNA polymerase III contains a core (composed of alpha, epsilon and theta chains) that associates with a tau subunit. This core dimerizes to form the PolIII' complex. PolIII' associates with the gamma complex (composed of gamma, delta, delta', psi and chi chains) and with the beta chain to form the complete DNA polymerase III complex.

It localises to the cytoplasm. It catalyses the reaction DNA(n) + a 2'-deoxyribonucleoside 5'-triphosphate = DNA(n+1) + diphosphate. Its function is as follows. DNA polymerase III is a complex, multichain enzyme responsible for most of the replicative synthesis in bacteria. This DNA polymerase also exhibits 3' to 5' exonuclease activity. The alpha chain is the DNA polymerase. This chain is DNA polymerase III subunit alpha (dnaE), found in Streptococcus pyogenes serotype M18 (strain MGAS8232).